The following is a 251-amino-acid chain: Probable ATP-dependent transporter ycf16 (251 aa).

Positions 6-250 (LEIKDLYASV…EKHGYDWITQ (245 aa)) constitute an ABC transporter domain. 38–45 (GPNGSGKS) contacts ATP.

This sequence belongs to the ABC transporter superfamily. Ycf16 family.

Its subcellular location is the plastid. It is found in the chloroplast. This Pyropia yezoensis (Susabi-nori) protein is Probable ATP-dependent transporter ycf16 (ycf16).